Consider the following 89-residue polypeptide: Small ribosomal subunit protein uS17 (89 aa).

Belongs to the universal ribosomal protein uS17 family. In terms of assembly, part of the 30S ribosomal subunit.

Its function is as follows. One of the primary rRNA binding proteins, it binds specifically to the 5'-end of 16S ribosomal RNA. The polypeptide is Small ribosomal subunit protein uS17 (Nocardia farcinica (strain IFM 10152)).